A 160-amino-acid polypeptide reads, in one-letter code: Serine-protein kinase RsbW (160 aa).

It belongs to the anti-sigma-factor family.

It catalyses the reaction L-seryl-[protein] + ATP = O-phospho-L-seryl-[protein] + ADP + H(+). It carries out the reaction L-threonyl-[protein] + ATP = O-phospho-L-threonyl-[protein] + ADP + H(+). Its function is as follows. Negative regulator of sigma-B activity. Phosphorylates and inactivates its specific antagonist protein, RsbV. Upon phosphorylation of RsbV, RsbW is released and binds to sigma-B, thereby blocking its ability to form an RNA polymerase holoenzyme (E-sigma-B). The polypeptide is Serine-protein kinase RsbW (Bacillus cereus (strain Q1)).